The primary structure comprises 253 residues: Proteasome subunit alpha type-3 (253 aa).

Residues 230 to 253 (ELTEKARKAGDAANKDEDSDNETH) are disordered. Residues 231 to 253 (LTEKARKAGDAANKDEDSDNETH) are compositionally biased toward basic and acidic residues. The residue at position 248 (Ser248) is a Phosphoserine.

This sequence belongs to the peptidase T1A family. In terms of assembly, the 26S proteasome consists of a 20S proteasome core and two 19S regulatory subunits. The 20S proteasome core is composed of 28 subunits that are arranged in four stacked rings, resulting in a barrel-shaped structure. The two end rings are each formed by seven alpha subunits, and the two central rings are each formed by seven beta subunits. The catalytic chamber with the active sites is on the inside of the barrel. Interacts with ntc.

It is found in the cytoplasm. Its subcellular location is the nucleus. In terms of biological role, the proteasome is a multicatalytic proteinase complex which is characterized by its ability to cleave peptides with Arg, Phe, Tyr, Leu, and Glu adjacent to the leaving group at neutral or slightly basic pH. The proteasome has an ATP-dependent proteolytic activity. This is Proteasome subunit alpha type-3 (Prosalpha7) from Drosophila melanogaster (Fruit fly).